The primary structure comprises 444 residues: UDP-N-acetylmuramate--L-alanine ligase (444 aa).

110–116 (GAHGKTS) contacts ATP.

The protein belongs to the MurCDEF family.

It is found in the cytoplasm. It carries out the reaction UDP-N-acetyl-alpha-D-muramate + L-alanine + ATP = UDP-N-acetyl-alpha-D-muramoyl-L-alanine + ADP + phosphate + H(+). It functions in the pathway cell wall biogenesis; peptidoglycan biosynthesis. Cell wall formation. This Streptococcus pneumoniae (strain P1031) protein is UDP-N-acetylmuramate--L-alanine ligase.